A 360-amino-acid chain; its full sequence is Phospho-N-acetylmuramoyl-pentapeptide-transferase (360 aa).

10 helical membrane-spanning segments follow: residues 25–45 (RGIL…PWLI), 74–94 (MGGA…ADLA), 97–117 (YVWV…VDDY), 132–152 (WKYF…YMTA), 168–188 (IEIP…VGSS), 199–219 (GLAI…CYLS), 236–256 (SGEL…FLWF), 263–283 (VFMG…IAVI), 288–308 (VVLF…MIQV), and 338–358 (VIVR…ATLK).

The protein belongs to the glycosyltransferase 4 family. MraY subfamily. The cofactor is Mg(2+).

It is found in the cell inner membrane. The catalysed reaction is UDP-N-acetyl-alpha-D-muramoyl-L-alanyl-gamma-D-glutamyl-meso-2,6-diaminopimeloyl-D-alanyl-D-alanine + di-trans,octa-cis-undecaprenyl phosphate = di-trans,octa-cis-undecaprenyl diphospho-N-acetyl-alpha-D-muramoyl-L-alanyl-D-glutamyl-meso-2,6-diaminopimeloyl-D-alanyl-D-alanine + UMP. The protein operates within cell wall biogenesis; peptidoglycan biosynthesis. Functionally, catalyzes the initial step of the lipid cycle reactions in the biosynthesis of the cell wall peptidoglycan: transfers peptidoglycan precursor phospho-MurNAc-pentapeptide from UDP-MurNAc-pentapeptide onto the lipid carrier undecaprenyl phosphate, yielding undecaprenyl-pyrophosphoryl-MurNAc-pentapeptide, known as lipid I. The polypeptide is Phospho-N-acetylmuramoyl-pentapeptide-transferase (Stutzerimonas stutzeri (strain A1501) (Pseudomonas stutzeri)).